The chain runs to 433 residues: Phosphomethylpyrimidine synthase (433 aa).

Residues N66, M94, Y123, H162, 184 to 186, 225 to 228, and E264 each bind substrate; these read SRG and DALR. Zn(2+) is bound at residue H268. Y291 serves as a coordination point for substrate. H332 is a binding site for Zn(2+). [4Fe-4S] cluster is bound by residues C408, C411, and C415.

This sequence belongs to the ThiC family. The cofactor is [4Fe-4S] cluster.

The catalysed reaction is 5-amino-1-(5-phospho-beta-D-ribosyl)imidazole + S-adenosyl-L-methionine = 4-amino-2-methyl-5-(phosphooxymethyl)pyrimidine + CO + 5'-deoxyadenosine + formate + L-methionine + 3 H(+). Its pathway is cofactor biosynthesis; thiamine diphosphate biosynthesis. Functionally, catalyzes the synthesis of the hydroxymethylpyrimidine phosphate (HMP-P) moiety of thiamine from aminoimidazole ribotide (AIR) in a radical S-adenosyl-L-methionine (SAM)-dependent reaction. The sequence is that of Phosphomethylpyrimidine synthase from Saccharolobus islandicus (strain M.14.25 / Kamchatka #1) (Sulfolobus islandicus).